Consider the following 159-residue polypeptide: 2-C-methyl-D-erythritol 2,4-cyclodiphosphate synthase (159 aa).

A divalent metal cation contacts are provided by D10 and H12. 4-CDP-2-C-methyl-D-erythritol 2-phosphate contacts are provided by residues 10-12 (DVH) and 37-38 (HS). H45 is an a divalent metal cation binding site. 4-CDP-2-C-methyl-D-erythritol 2-phosphate-binding positions include 59–61 (DIG), 64–68 (FLDTD), 103–109 (AQAPKML), 135–138 (TTTE), F142, and R145.

Belongs to the IspF family. As to quaternary structure, homotrimer. Requires a divalent metal cation as cofactor.

The catalysed reaction is 4-CDP-2-C-methyl-D-erythritol 2-phosphate = 2-C-methyl-D-erythritol 2,4-cyclic diphosphate + CMP. Its pathway is isoprenoid biosynthesis; isopentenyl diphosphate biosynthesis via DXP pathway; isopentenyl diphosphate from 1-deoxy-D-xylulose 5-phosphate: step 4/6. Functionally, involved in the biosynthesis of isopentenyl diphosphate (IPP) and dimethylallyl diphosphate (DMAPP), two major building blocks of isoprenoid compounds. Catalyzes the conversion of 4-diphosphocytidyl-2-C-methyl-D-erythritol 2-phosphate (CDP-ME2P) to 2-C-methyl-D-erythritol 2,4-cyclodiphosphate (ME-CPP) with a corresponding release of cytidine 5-monophosphate (CMP). The chain is 2-C-methyl-D-erythritol 2,4-cyclodiphosphate synthase from Francisella tularensis subsp. holarctica (strain OSU18).